A 209-amino-acid polypeptide reads, in one-letter code: Uracil phosphoribosyltransferase (209 aa).

5-phospho-alpha-D-ribose 1-diphosphate contacts are provided by residues Arg79, Arg104, and 131–139; that span reads DPMLATGGS. Uracil is bound by residues Ile194 and 199-201; that span reads GDA. A 5-phospho-alpha-D-ribose 1-diphosphate-binding site is contributed by Asp200.

It belongs to the UPRTase family. It depends on Mg(2+) as a cofactor.

It catalyses the reaction UMP + diphosphate = 5-phospho-alpha-D-ribose 1-diphosphate + uracil. It participates in pyrimidine metabolism; UMP biosynthesis via salvage pathway; UMP from uracil: step 1/1. Its activity is regulated as follows. Allosterically activated by GTP. Functionally, catalyzes the conversion of uracil and 5-phospho-alpha-D-ribose 1-diphosphate (PRPP) to UMP and diphosphate. This chain is Uracil phosphoribosyltransferase, found in Streptococcus sanguinis (strain SK36).